Consider the following 165-residue polypeptide: Putative 4-hydroxy-4-methyl-2-oxoglutarate aldolase (165 aa).

Residues 80–83 (GGNL) and Arg102 each bind substrate. Residue Asp103 coordinates a divalent metal cation.

Belongs to the class II aldolase/RraA-like family. Homotrimer. A divalent metal cation is required as a cofactor.

The catalysed reaction is 4-hydroxy-4-methyl-2-oxoglutarate = 2 pyruvate. It catalyses the reaction oxaloacetate + H(+) = pyruvate + CO2. Its function is as follows. Catalyzes the aldol cleavage of 4-hydroxy-4-methyl-2-oxoglutarate (HMG) into 2 molecules of pyruvate. Also contains a secondary oxaloacetate (OAA) decarboxylase activity due to the common pyruvate enolate transition state formed following C-C bond cleavage in the retro-aldol and decarboxylation reactions. The protein is Putative 4-hydroxy-4-methyl-2-oxoglutarate aldolase of Cupriavidus necator (strain ATCC 17699 / DSM 428 / KCTC 22496 / NCIMB 10442 / H16 / Stanier 337) (Ralstonia eutropha).